The primary structure comprises 631 residues: MNRLGRLPLPLPPSVCLFCRFRATASLPSSLQATRSMATARLRRRVARMTLSPDVAKPSVVKKTRGDKERFGPFAGMNQTEARIRETPRARSRAAQKRSGEPEEDSQKESPLYKALKMQTALTPIPYGRRAAIKAKIADITSFDQFQLLPVVRNSISSQALPGLVDVTPTPIQRLAIPRLLEEPKTEKKPTKADDDEPRYDQYLLAAETGSGKTLAYLLPVVDAVKREEARDKELEKKEQEEKAREREERLKNRAFDIEPEIPPLSNAGRPRAIILVPTSELVAQVGVKVKALSHTVKYRSGMISSNFTPRRIKNTLFHPDGIDILVATPHLLASIAKTEPYVLSRVSHLVLDEADSLLDRSFAPTTTEIISKAAPSLRKLILCSATIPRSLDNLLRKRYPDIKRLTTPNLHAIPRRVQLGVVDIEKDPYRGNRSLACADVIWSIGKAGDAESEGPYASYVAPKTKKILVFVNEREEADEVAQFLRSKGIDAQSLSRDSDARKQEEILAEFTEAPPPPSPDEILLAQKKRRYEDAIPFEMPEKANQGSSRRLANTKVLVTTDLASRGIDTLAVKTVILYHVPHTTIDFIHRLGRLGRMGKRGRGVVLVGKKDRKDVVKEVREGMFRGQALI.

A mitochondrion-targeting transit peptide spans 1–45; it reads MNRLGRLPLPLPPSVCLFCRFRATASLPSSLQATRSMATARLRRR. Residues 68 to 112 are disordered; it reads KERFGPFAGMNQTEARIRETPRARSRAAQKRSGEPEEDSQKESPL. Positions 98–108 are enriched in basic and acidic residues; the sequence is RSGEPEEDSQK. The Q motif motif lies at 141-174; it reads TSFDQFQLLPVVRNSISSQALPGLVDVTPTPIQR. Residues 180–193 show a composition bias toward basic and acidic residues; that stretch reads LLEEPKTEKKPTKA. Positions 180–199 are disordered; it reads LLEEPKTEKKPTKADDDEPR. The 213-residue stretch at 194–406 folds into the Helicase ATP-binding domain; sequence DDDEPRYDQY…RKRYPDIKRL (213 aa). 207-214 provides a ligand contact to ATP; sequence AETGSGKT. Positions 229–249 are disordered; the sequence is EARDKELEKKEQEEKAREREE. The DEAD box motif lies at 353-356; it reads DEAD. Positions 455 to 631 constitute a Helicase C-terminal domain; that stretch reads GPYASYVAPK…EGMFRGQALI (177 aa).

It belongs to the DEAD box helicase family. MRH4 subfamily.

It localises to the mitochondrion. The catalysed reaction is ATP + H2O = ADP + phosphate + H(+). Its function is as follows. ATP-binding RNA helicase involved in mitochondrial RNA metabolism. Required for maintenance of mitochondrial DNA. The polypeptide is ATP-dependent RNA helicase mrh4, mitochondrial (mrh4) (Aspergillus fumigatus (strain ATCC MYA-4609 / CBS 101355 / FGSC A1100 / Af293) (Neosartorya fumigata)).